The sequence spans 322 residues: Fructose-1,6-bisphosphatase class 1 (322 aa).

Mg(2+)-binding residues include E84, D103, L105, and D106. Residues 106–109 (DGSS), N198, and K264 contribute to the substrate site. E270 provides a ligand contact to Mg(2+).

It belongs to the FBPase class 1 family. Homotetramer. The cofactor is Mg(2+).

The protein localises to the cytoplasm. It carries out the reaction beta-D-fructose 1,6-bisphosphate + H2O = beta-D-fructose 6-phosphate + phosphate. Its pathway is carbohydrate biosynthesis; gluconeogenesis. The sequence is that of Fructose-1,6-bisphosphatase class 1 from Colwellia psychrerythraea (strain 34H / ATCC BAA-681) (Vibrio psychroerythus).